Reading from the N-terminus, the 186-residue chain is ATP synthase subunit delta, chloroplastic (186 aa).

The protein belongs to the ATPase delta chain family. In terms of assembly, F-type ATPases have 2 components, F(1) - the catalytic core - and F(0) - the membrane proton channel. F(1) has five subunits: alpha(3), beta(3), gamma(1), delta(1), epsilon(1). CF(0) has four main subunits: a(1), b(1), b'(1) and c(10-14). The alpha and beta chains form an alternating ring which encloses part of the gamma chain. F(1) is attached to F(0) by a central stalk formed by the gamma and epsilon chains, while a peripheral stalk is formed by the delta, b and b' chains.

The protein localises to the plastid. Its subcellular location is the chloroplast thylakoid membrane. Its function is as follows. F(1)F(0) ATP synthase produces ATP from ADP in the presence of a proton or sodium gradient. F-type ATPases consist of two structural domains, F(1) containing the extramembraneous catalytic core and F(0) containing the membrane proton channel, linked together by a central stalk and a peripheral stalk. During catalysis, ATP synthesis in the catalytic domain of F(1) is coupled via a rotary mechanism of the central stalk subunits to proton translocation. In terms of biological role, this protein is part of the stalk that links CF(0) to CF(1). It either transmits conformational changes from CF(0) to CF(1) or is implicated in proton conduction. The polypeptide is ATP synthase subunit delta, chloroplastic (Pyropia yezoensis (Susabi-nori)).